Here is a 156-residue protein sequence, read N- to C-terminus: Ribosomal RNA large subunit methyltransferase H (156 aa).

S-adenosyl-L-methionine-binding positions include Leu73, Gly104, and 123–128; that span reads LSSLTL.

This sequence belongs to the RNA methyltransferase RlmH family. In terms of assembly, homodimer.

The protein localises to the cytoplasm. The catalysed reaction is pseudouridine(1915) in 23S rRNA + S-adenosyl-L-methionine = N(3)-methylpseudouridine(1915) in 23S rRNA + S-adenosyl-L-homocysteine + H(+). Specifically methylates the pseudouridine at position 1915 (m3Psi1915) in 23S rRNA. The protein is Ribosomal RNA large subunit methyltransferase H of Neisseria meningitidis serogroup A / serotype 4A (strain DSM 15465 / Z2491).